The chain runs to 88 residues: U-scoloptoxin(XY)-Er1a (88 aa).

The signal sequence occupies residues 1–24 (MASQVVLSFALVVVLAVFVGQVDS). The interval 66–88 (RPELSPGAWDDSSEEKDNEASLA) is disordered. The propeptide occupies 79–88 (EEKDNEASLA).

Belongs to the scoloptoxin-XY family. Post-translationally, contains 3 disulfide bonds. In terms of tissue distribution, expressed by the venom gland.

The protein localises to the secreted. The chain is U-scoloptoxin(XY)-Er1a from Ethmostigmus rubripes (Giant centipede).